The chain runs to 156 residues: Perlucin-like protein (156 aa).

The first 22 residues, 1–22 (MGKLTVVGILTLFIFYIVAASG), serve as a signal peptide directing secretion. Disulfide bonds link cysteine 30–cysteine 41, cysteine 58–cysteine 156, and cysteine 131–cysteine 147. One can recognise a C-type lectin domain in the interval 37–156 (YKTNCYFFSP…CNTDQMGYIC (120 aa)).

Component of the organic matrix of calcified shell layers like nacre and prisms.

It is found in the secreted. This Mytilus galloprovincialis (Mediterranean mussel) protein is Perlucin-like protein.